A 363-amino-acid chain; its full sequence is Mannose-1-phosphate guanyltransferase (363 aa).

It belongs to the transferase hexapeptide repeat family.

The protein resides in the cytoplasm. It catalyses the reaction alpha-D-mannose 1-phosphate + GTP + H(+) = GDP-alpha-D-mannose + diphosphate. Its pathway is nucleotide-sugar biosynthesis; GDP-alpha-D-mannose biosynthesis; GDP-alpha-D-mannose from alpha-D-mannose 1-phosphate (GTP route): step 1/1. Involved in cell wall synthesis where it is required for glycosylation. Involved in cell cycle progression through cell-size checkpoint. The polypeptide is Mannose-1-phosphate guanyltransferase (MPG1) (Yarrowia lipolytica (strain CLIB 122 / E 150) (Yeast)).